The sequence spans 828 residues: Periplasmic nitrate reductase (828 aa).

Positions 1-31 (MKLSRRSFMKANAVAAAAAAAGLSVPGVARA) form a signal peptide, tat-type signal. In terms of domain architecture, 4Fe-4S Mo/W bis-MGD-type spans 39-95 (IKWDKAPCRFCGTGCGVLVGTQQGRVVACQGDPDAPVNRGLNCIKGYFLPKIMYGKD). 4 residues coordinate [4Fe-4S] cluster: Cys46, Cys49, Cys53, and Cys81. Residues Lys83, Gln150, Asn175, Cys179, 212–219 (WGSNMAEM), 243–247 (STYQH), 262–264 (QSD), Met372, Gln376, Asn482, 508–509 (SD), Lys531, Asp558, and 718–727 (TGRVLEHWHT) each bind Mo-bis(molybdopterin guanine dinucleotide). Substrate is bound at residue Phe794. Positions 802 and 819 each coordinate Mo-bis(molybdopterin guanine dinucleotide).

The protein belongs to the prokaryotic molybdopterin-containing oxidoreductase family. NasA/NapA/NarB subfamily. Component of the periplasmic nitrate reductase NapAB complex composed of NapA and NapB. [4Fe-4S] cluster serves as cofactor. It depends on Mo-bis(molybdopterin guanine dinucleotide) as a cofactor. Predicted to be exported by the Tat system. The position of the signal peptide cleavage has not been experimentally proven.

The protein localises to the periplasm. It carries out the reaction 2 Fe(II)-[cytochrome] + nitrate + 2 H(+) = 2 Fe(III)-[cytochrome] + nitrite + H2O. In terms of biological role, catalytic subunit of the periplasmic nitrate reductase complex NapAB. Receives electrons from NapB and catalyzes the reduction of nitrate to nitrite. The chain is Periplasmic nitrate reductase from Escherichia coli O1:K1 / APEC.